Here is a 540-residue protein sequence, read N- to C-terminus: Phosphomethylpyrimidine synthase (540 aa).

Substrate is bound by residues asparagine 143, methionine 172, tyrosine 201, histidine 237, 257-259 (SRG), 298-301 (DGLR), and glutamate 337. Histidine 341 serves as a coordination point for Zn(2+). Tyrosine 364 contacts substrate. Histidine 405 contributes to the Zn(2+) binding site. Residues cysteine 485, cysteine 488, and cysteine 493 each coordinate [4Fe-4S] cluster.

Belongs to the ThiC family. [4Fe-4S] cluster is required as a cofactor.

The enzyme catalyses 5-amino-1-(5-phospho-beta-D-ribosyl)imidazole + S-adenosyl-L-methionine = 4-amino-2-methyl-5-(phosphooxymethyl)pyrimidine + CO + 5'-deoxyadenosine + formate + L-methionine + 3 H(+). It functions in the pathway cofactor biosynthesis; thiamine diphosphate biosynthesis. Its function is as follows. Catalyzes the synthesis of the hydroxymethylpyrimidine phosphate (HMP-P) moiety of thiamine from aminoimidazole ribotide (AIR) in a radical S-adenosyl-L-methionine (SAM)-dependent reaction. The sequence is that of Phosphomethylpyrimidine synthase from Mycobacterium avium (strain 104).